The primary structure comprises 30 residues: U1-poneritoxin-Ng3e (30 aa).

As to expression, expressed by the venom gland.

The protein resides in the secreted. Its function is as follows. Has activity against some Gram-positive bacteria and S.cerevisiae. Has a non-hemolytic activity. The chain is U1-poneritoxin-Ng3e from Neoponera goeldii (Ponerine ant).